The following is a 325-amino-acid chain: Ribose-phosphate pyrophosphokinase 4 (325 aa).

Mg(2+)-binding residues include Asp-145 and His-147. The tract at residues 228-243 (GRHVVIVDDLVQSGGT) is binding of phosphoribosylpyrophosphate.

It belongs to the ribose-phosphate pyrophosphokinase family. Mg(2+) serves as cofactor.

It catalyses the reaction D-ribose 5-phosphate + ATP = 5-phospho-alpha-D-ribose 1-diphosphate + AMP + H(+). The chain is Ribose-phosphate pyrophosphokinase 4 from Oryza sativa subsp. japonica (Rice).